The primary structure comprises 235 residues: NADH-quinone oxidoreductase subunit C (235 aa).

It belongs to the complex I 30 kDa subunit family. As to quaternary structure, NDH-1 is composed of 14 different subunits. Subunits NuoB, C, D, E, F, and G constitute the peripheral sector of the complex.

Its subcellular location is the cell membrane. The enzyme catalyses a quinone + NADH + 5 H(+)(in) = a quinol + NAD(+) + 4 H(+)(out). In terms of biological role, NDH-1 shuttles electrons from NADH, via FMN and iron-sulfur (Fe-S) centers, to quinones in the respiratory chain. The immediate electron acceptor for the enzyme in this species is believed to be a menaquinone. Couples the redox reaction to proton translocation (for every two electrons transferred, four hydrogen ions are translocated across the cytoplasmic membrane), and thus conserves the redox energy in a proton gradient. In Mycobacterium avium (strain 104), this protein is NADH-quinone oxidoreductase subunit C.